The primary structure comprises 493 residues: MVTRIVILGGGPAGYEAALVAATSHPETTQVTVIDCDGIGGAAVLDDCVPSKTFIASTGLRTELRRAPHLGFHIDFDDAKISLPQIHARVKTLAAAQSADITAQLLSMGVQVIAGRGELIDSTPGLARHRIKATAADGSTSEHEADVVLVATGASPRILPSAQPDGERILTWRQLYDLDALPDHLIVVGSGVTGAEFVDAYTELGVPVTVVASQDHVLPYEDADAALVLEESFAERGVRLFKNARAASVTRTGAGVLVTMTDGRTVEGSHALMTIGSVPNTSGLGLERVGIQLGRGNYLTVDRVSRTLATGIYAAGDCTGLLPLASVAAMQGRIAMYHALGEGVSPIRLRTVAATVFTRPEIAAVGVPQSVIDAGSVAARTIMLPLRTNARAKMSEMRHGFVKIFCRRSTGVVIGGVVVAPIASELILPIAVAVQNRITVNELAQTLAVYPSLSGSITEAARRLMAHDDLDCTAAQDAAEQLALVPHHLPTSN.

FAD is bound by residues 12–13 (PA), 35–37 (DCD), 42–43 (AA), Lys52, Gly117, Asp317, 324–325 (LA), and Tyr450.

The protein belongs to the class-I pyridine nucleotide-disulfide oxidoreductase family. As to quaternary structure, homotetramer. It depends on FAD as a cofactor.

It catalyses the reaction a quinone + NADH + H(+) = a quinol + NAD(+). The catalysed reaction is a quinone + NADPH + H(+) = a quinol + NADP(+). Its function is as follows. May contribute to virulence by increasing resistance to reactive oxygen intermediates. It can reduce 2,6-dimethyl-1,4-benzoquinone (DMBQ), 5-hydroxy-1,4-naphthaquinone (5-HNQ) and menadione. In Mycobacterium tuberculosis (strain CDC 1551 / Oshkosh), this protein is NAD(P)H dehydrogenase (quinone) (lpdA).